Consider the following 387-residue polypeptide: ATP-dependent Clp protease proteolytic subunit-related protein 1, chloroplastic (387 aa).

Residues 1–41 (MATALVSPLTSQLNHEAVCSKFVLPKSPFMSGSKLFSSNMP) constitute a chloroplast transit peptide. A compositionally biased stretch (basic and acidic residues) spans 355–365 (QDSSFEKRDYD). The disordered stretch occupies residues 355–387 (QDSSFEKRDYDGTLAQRAMRPGGGSPAAPAGLR).

The protein belongs to the peptidase S14 family. In terms of assembly, component of the chloroplastic Clp protease core complex which consist of at least 16 proteins: CLPP4 (3 copies), CLPP5 (3 copies), CLPR4 (2 copies), ClpP1 (1 copy), CLPP6 (1 copy), CLPR2 (1 copy), CLPT1 (1 copy), CLPT2 (1 copy) and 3 copies of CLPP3 and/or CLPR1 and/or CLPR3. The core complex is organized in two heptameric rings, one containing CLPP3,4,5,6 in a 1:2:3:1 ratio and the other CLPP1 and CLPR1,2,3,4 in a 3:1:1:1:1 ratio.

The protein resides in the plastid. Its subcellular location is the chloroplast stroma. Its function is as follows. Required for chloroplast development and differentiation. This is ATP-dependent Clp protease proteolytic subunit-related protein 1, chloroplastic from Arabidopsis thaliana (Mouse-ear cress).